We begin with the raw amino-acid sequence, 161 residues long: Glycine/sarcosine/betaine reductase complex component A2 (161 aa).

Selenocysteine 42 is a catalytic residue. Residue selenocysteine 42 is a non-standard amino acid, selenocysteine.

Belongs to the GrdA family. In terms of assembly, monomer. Component of the glycine, sarcosine and betaine reductase complexes, together with components B and C.

The enzyme catalyses acetyl phosphate + [thioredoxin]-disulfide + NH4(+) + H2O = [thioredoxin]-dithiol + glycine + phosphate + H(+). The catalysed reaction is acetyl phosphate + methylamine + [thioredoxin]-disulfide + H2O = sarcosine + [thioredoxin]-dithiol + phosphate + H(+). It catalyses the reaction acetyl phosphate + trimethylamine + [thioredoxin]-disulfide + H2O = glycine betaine + [thioredoxin]-dithiol + phosphate + H(+). Its function is as follows. In the first step of glycine, betaine and sarcosine reductases, the substrate is bound to component PB via a Schiff base intermediate. Then the PB-activated substrate is nucleophilically attacked by the selenol anion of component PA to transform it to a carboxymethylated selenoether and the respective amine. By action of component PC, acetyl phosphate is formed, leaving component PA in its oxidized state. Finally component PA becomes reduced by the thioredoxin system to start a new catalytic cycle of reductive deamination. This Photobacterium profundum (strain SS9) protein is Glycine/sarcosine/betaine reductase complex component A2 (grdA2).